Here is a 311-residue protein sequence, read N- to C-terminus: Heme A synthase (311 aa).

The Cytoplasmic segment spans residues 1-6 (MQRFIK). The helical transmembrane segment at 7–27 (WLAVITSLDLLVVLLGGALVT) threads the bilayer. Topologically, residues 28-62 (KTGSGQGCGKSWPLCNGEFVPSNLSMETIIELSHR) are extracellular. C35 and C42 are oxidised to a cystine. The active site involves E58. Heme o is bound at residue H61. The helical transmembrane segment at 63 to 83 (LTSGSAGILVTLLCILSWKYY) threads the bilayer. The Cytoplasmic segment spans residues 84–91 (KHVRETKT). The helical transmembrane segment at 92–112 (LAILSFVFLVAQALMGAAAVV) threads the bilayer. Over 113-121 (WGQMPAVLA) the chain is Extracellular. Residues 122-142 (IHFGISLISFASVILLTCLIF) traverse the membrane as a helical segment. H123 lines the heme o pocket. The Cytoplasmic segment spans residues 143-159 (EIDQKFDARSLIMDKKM). Residues 160–180 (KFHIYGVTIYSYIVVYTGALV) form a helical membrane-spanning segment. At 181–211 (RHERATLACPDFPLCSKSRPMPTQLHEWVQM) the chain is on the extracellular side. Cysteines 189 and 195 form a disulfide. Residues 212–232 (GHRVAAMLIFAWILYAMIIAI) traverse the membrane as a helical segment. H213 provides a ligand contact to heme b. The Cytoplasmic segment spans residues 233–243 (RHYKQQRVVYW). A helical membrane pass occupies residues 244 to 264 (GWIISFILVTLQAIVGILVVF). The Extracellular segment spans residues 265–271 (TNASLAM). The chain crosses the membrane as a helical span at residues 272-292 (ALLHSLFISCLFAVLCYLVMI). H275 contacts heme b. Residues 293–311 (GTRSTVNAKETESTSKQTK) lie on the Cytoplasmic side of the membrane.

The protein belongs to the COX15/CtaA family. Type 1 subfamily. In terms of assembly, interacts with CtaB. It depends on heme b as a cofactor.

Its subcellular location is the cell membrane. It catalyses the reaction Fe(II)-heme o + 2 A + H2O = Fe(II)-heme a + 2 AH2. Its pathway is porphyrin-containing compound metabolism; heme A biosynthesis; heme A from heme O: step 1/1. In terms of biological role, catalyzes the conversion of heme O to heme A by two successive hydroxylations of the methyl group at C8. The first hydroxylation forms heme I, the second hydroxylation results in an unstable dihydroxymethyl group, which spontaneously dehydrates, resulting in the formyl group of heme A. The chain is Heme A synthase from Bacillus mycoides (strain KBAB4) (Bacillus weihenstephanensis).